The following is a 345-amino-acid chain: uncharacterized protein (345 aa).

Positions 1-98 (MNDEMKGKSG…ISGKSFIDPE (98 aa)) are disordered. Basic and acidic residues-rich tracts occupy residues 18-27 (RSDDDSDKRT), 42-68 (SRADGGRRPARDDKQSQPRDRKWEDSP), and 76-86 (PGDETPEKADH).

The protein belongs to the class IV-like SAM-binding methyltransferase superfamily. RNA methyltransferase TrmH family.

This is an uncharacterized protein from Escherichia coli O157:H7.